The chain runs to 221 residues: uncharacterized protein (221 aa).

The next 4 helical transmembrane spans lie at 30-50 (FGIF…LPLA), 62-82 (AGVV…LYWI), 144-164 (VWVF…VYVY), and 179-199 (ILDQ…LLYL).

Belongs to the DedA family.

The protein resides in the cell membrane. This is an uncharacterized protein from Bacillus subtilis (strain 168).